The chain runs to 301 residues: Probable 5-dehydro-4-deoxyglucarate dehydratase (301 aa).

Belongs to the DapA family.

It carries out the reaction 5-dehydro-4-deoxy-D-glucarate + H(+) = 2,5-dioxopentanoate + CO2 + H2O. Its pathway is carbohydrate acid metabolism; D-glucarate degradation; 2,5-dioxopentanoate from D-glucarate: step 2/2. The polypeptide is Probable 5-dehydro-4-deoxyglucarate dehydratase (Chelativorans sp. (strain BNC1)).